The sequence spans 132 residues: UPF0292 protein PYRAB04740 (132 aa).

Residues 20–100 form the Toprim domain; that stretch reads DGAIIVEGPR…KVDTETRRSL (81 aa). Positions 26, 69, and 71 each coordinate Mg(2+).

The protein belongs to the UPF0292 family. Mg(2+) serves as cofactor.

In Pyrococcus abyssi (strain GE5 / Orsay), this protein is UPF0292 protein PYRAB04740.